The primary structure comprises 181 residues: Adenylate kinase (181 aa).

Gly-10 to Thr-15 provides a ligand contact to ATP. The tract at residues Ser-30–Val-59 is NMP. AMP is bound by residues Thr-31, Arg-36, Lys-57 to Val-59, Gly-85 to Arg-88, and Gln-92. Residues Ala-126–Asp-132 form an LID region. Arg-127 contributes to the ATP binding site. 2 residues coordinate AMP: Arg-129 and Arg-140. Gly-166 serves as a coordination point for ATP.

Belongs to the adenylate kinase family. As to quaternary structure, monomer.

Its subcellular location is the cytoplasm. It carries out the reaction AMP + ATP = 2 ADP. The protein operates within purine metabolism; AMP biosynthesis via salvage pathway; AMP from ADP: step 1/1. In terms of biological role, catalyzes the reversible transfer of the terminal phosphate group between ATP and AMP. Plays an important role in cellular energy homeostasis and in adenine nucleotide metabolism. In Corynebacterium aurimucosum (strain ATCC 700975 / DSM 44827 / CIP 107346 / CN-1) (Corynebacterium nigricans), this protein is Adenylate kinase.